We begin with the raw amino-acid sequence, 128 residues long: MTTDKDKMAVGRLKSRPQFLAVRAGESRRGPLFLLEVLDRNDPEGEARVGFTVTKKHGNAVERNRMRRRLKEAVRLSAGFAMKPGHDYVIVARRDLLNAPFDALTRALRDRIENKPKQKRPPAGSRKS.

This sequence belongs to the RnpA family. As to quaternary structure, consists of a catalytic RNA component (M1 or rnpB) and a protein subunit.

It carries out the reaction Endonucleolytic cleavage of RNA, removing 5'-extranucleotides from tRNA precursor.. Functionally, RNaseP catalyzes the removal of the 5'-leader sequence from pre-tRNA to produce the mature 5'-terminus. It can also cleave other RNA substrates such as 4.5S RNA. The protein component plays an auxiliary but essential role in vivo by binding to the 5'-leader sequence and broadening the substrate specificity of the ribozyme. The sequence is that of Ribonuclease P protein component from Rhizobium meliloti (strain 1021) (Ensifer meliloti).